A 187-amino-acid polypeptide reads, in one-letter code: Isopentenyl-diphosphate Delta-isomerase (187 aa).

Mn(2+) is bound by residues histidine 36, histidine 43, and histidine 80. Positions valine 41–glutamate 178 constitute a Nudix hydrolase domain. A Mg(2+)-binding site is contributed by glutamate 98. Positions 127 and 129 each coordinate Mn(2+). Glutamate 129 is an active-site residue.

The protein belongs to the IPP isomerase type 1 family. The cofactor is Mg(2+). Mn(2+) serves as cofactor.

The protein resides in the cytoplasm. The enzyme catalyses isopentenyl diphosphate = dimethylallyl diphosphate. It participates in isoprenoid biosynthesis; dimethylallyl diphosphate biosynthesis; dimethylallyl diphosphate from isopentenyl diphosphate: step 1/1. In terms of biological role, catalyzes the 1,3-allylic rearrangement of the homoallylic substrate isopentenyl (IPP) to its highly electrophilic allylic isomer, dimethylallyl diphosphate (DMAPP). This is Isopentenyl-diphosphate Delta-isomerase from Haloarcula marismortui (strain ATCC 43049 / DSM 3752 / JCM 8966 / VKM B-1809) (Halobacterium marismortui).